A 177-amino-acid polypeptide reads, in one-letter code: HVA22-like protein a (177 aa).

Transmembrane regions (helical) follow at residues 18 to 38, 47 to 67, and 68 to 88; these read VLAG…QAIE, QWLT…TFAK, and LIEW…WLVI.

It belongs to the DP1 family. Predominantly expressed in flower buds and stem.

It localises to the membrane. The sequence is that of HVA22-like protein a (HVA22A) from Arabidopsis thaliana (Mouse-ear cress).